The sequence spans 270 residues: Formamidopyrimidine-DNA glycosylase (270 aa).

Proline 2 (schiff-base intermediate with DNA) is an active-site residue. The active-site Proton donor is glutamate 3. Lysine 57 serves as the catalytic Proton donor; for beta-elimination activity. Histidine 90, arginine 109, and arginine 151 together coordinate DNA. Residues 236–270 (QVYGRGGKLCMVCSNRLKEVRLGQRSTVYCTQCQR) form an FPG-type zinc finger. Arginine 260 (proton donor; for delta-elimination activity) is an active-site residue.

The protein belongs to the FPG family. In terms of assembly, monomer. It depends on Zn(2+) as a cofactor.

The catalysed reaction is Hydrolysis of DNA containing ring-opened 7-methylguanine residues, releasing 2,6-diamino-4-hydroxy-5-(N-methyl)formamidopyrimidine.. The enzyme catalyses 2'-deoxyribonucleotide-(2'-deoxyribose 5'-phosphate)-2'-deoxyribonucleotide-DNA = a 3'-end 2'-deoxyribonucleotide-(2,3-dehydro-2,3-deoxyribose 5'-phosphate)-DNA + a 5'-end 5'-phospho-2'-deoxyribonucleoside-DNA + H(+). In terms of biological role, involved in base excision repair of DNA damaged by oxidation or by mutagenic agents. Acts as a DNA glycosylase that recognizes and removes damaged bases. Has a preference for oxidized purines, such as 7,8-dihydro-8-oxoguanine (8-oxoG). Has AP (apurinic/apyrimidinic) lyase activity and introduces nicks in the DNA strand. Cleaves the DNA backbone by beta-delta elimination to generate a single-strand break at the site of the removed base with both 3'- and 5'-phosphates. This chain is Formamidopyrimidine-DNA glycosylase, found in Idiomarina loihiensis (strain ATCC BAA-735 / DSM 15497 / L2-TR).